A 437-amino-acid chain; its full sequence is Cysteine--tRNA ligase (437 aa).

Cys31 contacts Zn(2+). A 'HIGH' region motif is present at residues 33-43 (PTVYNDLHLGN). Zn(2+)-binding residues include Cys205, His230, and Glu234. A 'KMSKS' region motif is present at residues 262-266 (KMSKS). ATP is bound at residue Lys265.

Belongs to the class-I aminoacyl-tRNA synthetase family. Monomer. Zn(2+) serves as cofactor.

It is found in the cytoplasm. The enzyme catalyses tRNA(Cys) + L-cysteine + ATP = L-cysteinyl-tRNA(Cys) + AMP + diphosphate. The chain is Cysteine--tRNA ligase (cysS) from Mycoplasma pneumoniae (strain ATCC 29342 / M129 / Subtype 1) (Mycoplasmoides pneumoniae).